Here is a 112-residue protein sequence, read N- to C-terminus: C-C motif chemokine 27 (112 aa).

An N-terminal signal peptide occupies residues 1-24 (MKGPPTFCSLLLLSLLLSPDPTAA). 2 disulfide bridges follow: Cys-33-Cys-62 and Cys-34-Cys-77.

Belongs to the intercrine beta (chemokine CC) family. As to quaternary structure, monomer, dimer, and tetramer. Heparin avidly promotes oligomerization. Interacts with TNFAIP6 (via Link domain). Testis, thymus, placenta, ovary and skin.

Its subcellular location is the secreted. Chemotactic factor that attracts skin-associated memory T-lymphocytes. May play a role in mediating homing of lymphocytes to cutaneous sites. Binds to CCR10. The polypeptide is C-C motif chemokine 27 (CCL27) (Homo sapiens (Human)).